Here is a 378-residue protein sequence, read N- to C-terminus: UDP-N-acetylglucosamine--N-acetylmuramyl-(pentapeptide) pyrophosphoryl-undecaprenol N-acetylglucosamine transferase (378 aa).

UDP-N-acetyl-alpha-D-glucosamine is bound by residues 14–16, Asn-125, Arg-165, Ser-193, and Gln-293; that span reads TGG.

This sequence belongs to the glycosyltransferase 28 family. MurG subfamily.

It localises to the cell inner membrane. It carries out the reaction di-trans,octa-cis-undecaprenyl diphospho-N-acetyl-alpha-D-muramoyl-L-alanyl-D-glutamyl-meso-2,6-diaminopimeloyl-D-alanyl-D-alanine + UDP-N-acetyl-alpha-D-glucosamine = di-trans,octa-cis-undecaprenyl diphospho-[N-acetyl-alpha-D-glucosaminyl-(1-&gt;4)]-N-acetyl-alpha-D-muramoyl-L-alanyl-D-glutamyl-meso-2,6-diaminopimeloyl-D-alanyl-D-alanine + UDP + H(+). It participates in cell wall biogenesis; peptidoglycan biosynthesis. Cell wall formation. Catalyzes the transfer of a GlcNAc subunit on undecaprenyl-pyrophosphoryl-MurNAc-pentapeptide (lipid intermediate I) to form undecaprenyl-pyrophosphoryl-MurNAc-(pentapeptide)GlcNAc (lipid intermediate II). The protein is UDP-N-acetylglucosamine--N-acetylmuramyl-(pentapeptide) pyrophosphoryl-undecaprenol N-acetylglucosamine transferase of Bartonella quintana (strain Toulouse) (Rochalimaea quintana).